The sequence spans 521 residues: Acidic amino acid decarboxylase GADL1 (521 aa).

Over residues 1 to 12 (MSLLPDRERAPD) the composition is skewed to basic and acidic residues. The tract at residues 1–20 (MSLLPDRERAPDGDISPQEM) is disordered. Position 333 is an N6-(pyridoxal phosphate)lysine (Lys-333).

Belongs to the group II decarboxylase family. In terms of assembly, homodimer. It depends on pyridoxal 5'-phosphate as a cofactor. Expressed at highest levels in skeletal muscles. Also detected heart, spleen and rumen.

It carries out the reaction L-aspartate + H(+) = beta-alanine + CO2. The enzyme catalyses 3-sulfino-L-alanine + H(+) = hypotaurine + CO2. It catalyses the reaction L-cysteate + H(+) = taurine + CO2. Its function is as follows. Catalyzes the decarboxylation of L-aspartate, 3-sulfino-L-alanine (cysteine sulfinic acid), and L-cysteate to beta-alanine, hypotaurine and taurine, respectively. The preferred substrate is L-aspartate. Does not exhibit any decarboxylation activity toward glutamate. The sequence is that of Acidic amino acid decarboxylase GADL1 (GADL1) from Bos taurus (Bovine).